Here is a 152-residue protein sequence, read N- to C-terminus: Arginine repressor (152 aa).

The protein belongs to the ArgR family.

It is found in the cytoplasm. The protein operates within amino-acid biosynthesis; L-arginine biosynthesis [regulation]. Functionally, regulates arginine biosynthesis genes. This Lactococcus lactis subsp. cremoris (strain MG1363) protein is Arginine repressor.